We begin with the raw amino-acid sequence, 425 residues long: Enolase (425 aa).

Glutamine 162 provides a ligand contact to (2R)-2-phosphoglycerate. Glutamate 204 acts as the Proton donor in catalysis. Mg(2+)-binding residues include aspartate 241, glutamate 282, and aspartate 309. The (2R)-2-phosphoglycerate site is built by lysine 334, arginine 363, serine 364, and lysine 385. Lysine 334 functions as the Proton acceptor in the catalytic mechanism.

Belongs to the enolase family. The cofactor is Mg(2+).

It localises to the cytoplasm. The protein localises to the secreted. The protein resides in the cell surface. It carries out the reaction (2R)-2-phosphoglycerate = phosphoenolpyruvate + H2O. The protein operates within carbohydrate degradation; glycolysis; pyruvate from D-glyceraldehyde 3-phosphate: step 4/5. Catalyzes the reversible conversion of 2-phosphoglycerate (2-PG) into phosphoenolpyruvate (PEP). It is essential for the degradation of carbohydrates via glycolysis. The chain is Enolase from Corynebacterium diphtheriae (strain ATCC 700971 / NCTC 13129 / Biotype gravis).